The primary structure comprises 1922 residues: Endoribonuclease Dicer (1922 aa).

One can recognise a Helicase ATP-binding domain in the interval 51–227 (LLEAALDHNT…ELEEKIQKLE (177 aa)). An ATP-binding site is contributed by 64–71 (LNTGSGKT). The short motif at 175–178 (DECH) is the DECH box element. Residues 256–595 (DCGPFTDRSG…LRNKCSKSVD (340 aa)) are required for interaction with PRKRA and TARBP2. Residues 409–433 (YVSWSDSEDDDEDEEIEEKEKPETN) are disordered. A phosphoserine mark is found at serine 413 and serine 415. The segment covering 414–425 (DSEDDDEDEEIE) has biased composition (acidic residues). The Helicase C-terminal domain occupies 433–602 (NFPSPFTNIL…SVDTGETDID (170 aa)). Positions 630-722 (AIGHINRYCA…MPVGKETVKY (93 aa)) constitute a Dicer dsRNA-binding fold domain. Positions 895–1042 (KFMEDIEKSE…LVPELCAIHP (148 aa)) constitute a PAZ domain. Phosphoserine occurs at positions 1016 and 1160. The region spanning 1276–1403 (DSEQSPSIGY…TDKWEKDEMT (128 aa)) is the RNase III 1 domain. The Mg(2+) site is built by glutamate 1316, aspartate 1395, and glutamate 1398. Phosphoserine occurs at positions 1460, 1468, and 1470. Residues 1666–1824 (FENFEKKINY…LAGAIYMDSG (159 aa)) enclose the RNase III 2 domain. The Mg(2+) site is built by glutamate 1705, aspartate 1810, and glutamate 1813. One can recognise a DRBM domain in the interval 1849 to 1914 (VPRSPVRELL…ARRALRSLKA (66 aa)). A Phosphoserine modification is found at serine 1868.

The protein belongs to the helicase family. Dicer subfamily. As to quaternary structure, component of the RISC loading complex (RLC), or micro-RNA (miRNA) loading complex (miRLC), which is composed of DICER1, AGO2 and TARBP2; DICER1 and TARBP2 are required to process precursor miRNAs (pre-miRNAs) to mature miRNAs and then load them onto AGO2. Note that the trimeric RLC/miRLC is also referred to as RISC. Interacts with DHX9, AGO1, PIWIL1 and PRKRA. Associates with the 60S ribosome. Interacts with BCDIN3D. Interacts with AGO2, TARBP2, EIF6, MOV10 and RPL7A (60S ribosome subunit); they form a large RNA-induced silencing complex (RISC). Interacts (via Dicer dsRNA-binding fold domain) with ALOX5 (via PLAT domain); this interaction enhances arachidonate 5-lipoxygenase activity and modifies the miRNA precursor processing activity of DICER1. In terms of assembly, (Microbial infection) Interacts with ebolavirus transcriptional activator VP30; this interaction prevents TARBP2/TRBP binding to DICER1 and thus allows the virus to counteract host RNA silencing. (Microbial infection) Interacts with ebolavirus transcriptional activator VP35; this interaction prevents TARBP2/TRBP binding to DICER1 and thus allows the virus to counteract host RNA silencing. Requires Mg(2+) as cofactor. It depends on Mn(2+) as a cofactor.

It is found in the cytoplasm. The protein resides in the perinuclear region. It catalyses the reaction Endonucleolytic cleavage to 5'-phosphomonoester.. In terms of biological role, double-stranded RNA (dsRNA) endoribonuclease playing a central role in short dsRNA-mediated post-transcriptional gene silencing. Cleaves naturally occurring long dsRNAs and short hairpin pre-microRNAs (miRNA) into fragments of twenty-one to twenty-three nucleotides with 3' overhang of two nucleotides, producing respectively short interfering RNAs (siRNA) and mature microRNAs. SiRNAs and miRNAs serve as guide to direct the RNA-induced silencing complex (RISC) to complementary RNAs to degrade them or prevent their translation. Gene silencing mediated by siRNAs, also called RNA interference, controls the elimination of transcripts from mobile and repetitive DNA elements of the genome but also the degradation of exogenous RNA of viral origin for instance. The miRNA pathway on the other side is a mean to specifically regulate the expression of target genes. This Homo sapiens (Human) protein is Endoribonuclease Dicer (DICER1).